The chain runs to 103 residues: Large ribosomal subunit protein bL21 (103 aa).

The protein belongs to the bacterial ribosomal protein bL21 family. In terms of assembly, part of the 50S ribosomal subunit. Contacts protein L20.

In terms of biological role, this protein binds to 23S rRNA in the presence of protein L20. The sequence is that of Large ribosomal subunit protein bL21 from Erwinia tasmaniensis (strain DSM 17950 / CFBP 7177 / CIP 109463 / NCPPB 4357 / Et1/99).